The chain runs to 479 residues: Zinc metalloproteinase/disintegrin (479 aa).

The first 20 residues, 1–20, serve as a signal peptide directing secretion; that stretch reads MIQVLLVTICLAAFPYQGSS. Positions 21–187 are excised as a propeptide; that stretch reads IILESGKVND…PIKKASQLIV (167 aa). One can recognise a Peptidase M12B domain in the interval 193–390; that stretch reads RYMEIVIVVD…ENPPCILNKP (198 aa). Ca(2+) contacts are provided by Glu-196 and Asp-280. Intrachain disulfides connect Cys-304–Cys-385, Cys-344–Cys-369, and Cys-346–Cys-352. Position 329 (His-329) interacts with Zn(2+). Glu-330 is an active-site residue. Residues His-333 and His-339 each coordinate Zn(2+). 2 residues coordinate Ca(2+): Cys-385 and Asn-388. A propeptide spanning residues 390–414 is cleaved from the precursor; sequence PLRTDTVSTPVSGNELLEAGKDYDR. The Disintegrin domain maps to 398-479; it reads TPVSGNELLE…ADCPRNPYHA (82 aa). Disulfide bonds link Cys-435/Cys-441, Cys-440/Cys-465, and Cys-453/Cys-472. Positions 457-459 match the Cell attachment site motif; sequence RGD.

It belongs to the venom metalloproteinase (M12B) family. P-II subfamily. P-IIa sub-subfamily. Monomer. It depends on Zn(2+) as a cofactor. Expressed by the venom gland.

Its subcellular location is the secreted. In terms of biological role, snake venom metalloproteinase that impairs hemostasis in the envenomed animal. Functionally, inhibits platelet aggregation induced by ADP, thrombin, platelet-activating factor and collagen. Acts by inhibiting fibrinogen interaction with platelet receptors GPIIb/GPIIIa (ITGA2B/ITGB3). This chain is Zinc metalloproteinase/disintegrin, found in Deinagkistrodon acutus (Hundred-pace snake).